A 226-amino-acid polypeptide reads, in one-letter code: MQLSTFSHSEDELLKKANWLAGFTLGEIAHQLNIDVPLDLRRDKGWVGQLIETALGAKAGSKPEQDFAHLGIELKTIPINHKGFPLETTFVSLAPLTQNTGITWQTSHVRHKLQKVLWIPVQGERHIPVAERHIGQPILWEPSCEQEQQLKNDWEELMEYIIFGRLNEINATLGEVLQLRPKGRNRRSLTAAVNQQGERVQSLPLGFYLRKQFTAEILQNFLRSPL.

It belongs to the MutH family.

The protein localises to the cytoplasm. Functionally, sequence-specific endonuclease that cleaves unmethylated GATC sequences. It is involved in DNA mismatch repair. This Actinobacillus pleuropneumoniae serotype 5b (strain L20) protein is DNA mismatch repair protein MutH.